The following is an 88-amino-acid chain: Large ribosomal subunit protein eL31 (88 aa).

Belongs to the eukaryotic ribosomal protein eL31 family.

In Methanoregula boonei (strain DSM 21154 / JCM 14090 / 6A8), this protein is Large ribosomal subunit protein eL31.